Reading from the N-terminus, the 259-residue chain is DNA-directed RNA polymerase subunit Rpo3 (259 aa).

The protein belongs to the archaeal Rpo3/eukaryotic RPB3 RNA polymerase subunit family. In terms of assembly, part of the RNA polymerase complex.

It localises to the cytoplasm. It carries out the reaction RNA(n) + a ribonucleoside 5'-triphosphate = RNA(n+1) + diphosphate. In terms of biological role, DNA-dependent RNA polymerase (RNAP) catalyzes the transcription of DNA into RNA using the four ribonucleoside triphosphates as substrates. This is DNA-directed RNA polymerase subunit Rpo3 from Pyrobaculum arsenaticum (strain DSM 13514 / JCM 11321 / PZ6).